The primary structure comprises 288 residues: 33 kDa chaperonin (288 aa).

Cystine bridges form between cysteine 233–cysteine 235 and cysteine 267–cysteine 270.

The protein belongs to the HSP33 family. Post-translationally, under oxidizing conditions two disulfide bonds are formed involving the reactive cysteines. Under reducing conditions zinc is bound to the reactive cysteines and the protein is inactive.

The protein localises to the cytoplasm. In terms of biological role, redox regulated molecular chaperone. Protects both thermally unfolding and oxidatively damaged proteins from irreversible aggregation. Plays an important role in the bacterial defense system toward oxidative stress. The polypeptide is 33 kDa chaperonin (Pasteurella multocida (strain Pm70)).